The primary structure comprises 1262 residues: MANPFLMDEDLDGCDAAANPFLMQSEPEPSSDNPFMAATVASNPFAFGADDLELGAEPEAEATHDNDLDPAMSFFGTTIEAEDDTLSLKSGAEEEDEGKKPPQSQPQLQSHAHPHPPPPRPLVPPQSTQDLISTVSSQLDETSSELLGRIPATRSPSPVSMRDLHSPSPTPDSGLADLLDVSVDSGSSAHTQGIEADLISGVAGGVRLDNPFAVPTAVPNIQAAVPLPATPIKQPPRPPPPRPAPPRPAPPGQAAPQRPPPPLAAVNPPPAAPEADDLLDMFGTTACKPAKPPPPKSKEDILSLFEQPHVPLSQPASKPDLLHDDLDETIGEGEPPEQEEPDTEQSNEISSRDEPVFTSLLIRPDESTHDITSQPQAATGLERQVNNMAAPSGTASTQRATTPDIEITTVEDLPRSDDEDEPEAMQEPETETKPQIEPDTEPEIVSEHSPPTERLVTQAALVDGELIAAEPEPEEMDTGLDFPLASSGQLSANPFASPDEEEPNFAPMPAAVANIFAVNDPDSQMETPKAPSHTANIFASDPDEFDAFSAKFDSVKKDNISIMDGFGGSGAITPTGGDAWGGSAFGSTTISANACGDTNSADDGFGNDDDDFYAMQAPARADSVESVDKDFSVVIRPMAEETSGVAPQLAPPPPPARGVNQAQTTSLPGLTVNPFEDVSGFPAPGLPPTDGTAIKRTDSQDTPQTPLYDEDVSQPLEEFPRLHYIGPGWEMQLRQPNKKKITGQRFWKKIVVRLVVQNDVPVVQLLNQAGDKQPFQELPLQPSYSVSEIGAQQYDQFGKIFTMKLQYIFYKERPGVRPGQVTKAERITNKLTKFAQYAIAGDYEGVKEFGSDLKKLGLPVEHAPQSSQLFKIGSMNYEDMKQFSVCIEEALFKIPALRERALTYKMEEVQVTAVDEITVEQDFEGKILKQIARVRLFFLAFLTGMPTIELGVNDMWRQGKEVVGRHDIIPVATEEWIRLEAVEFHSVVNQKEYERTRTIKFQPPDANYIELLRFRVRPPKNRELPLQLKATWCVSGNKVELRADILVPGFTSRKLGQIPCEDVSVRFPIPECWIYLFRVEKHFRYGSVKSAHRRTGKIKGIERILGAVDTLQESLIEVTSGQAKYEHHHRAIVWRCPRLPKEGQGAYTTHQLVCRMALTSYDQIPSELAPYAFVEFTMPATQVSHTTVRSVSVQDSDGDEPPEKYVRYLARHEYKVGIETTHGESTNAYLAATRPIREEPPTTATKPTASPVAPSDSDTDSN.

4 consecutive short sequence motifs (NPF) follow at residues 3-5 (NPF), 19-21 (NPF), 33-35 (NPF), and 43-45 (NPF). Positions 17–36 (AANPFLMQSEPEPSSDNPFM) are disordered. Residues 49 to 189 (ADDLELGAEP…DVSVDSGSSA (141 aa)) are disordered. Residues 50–60 (DDLELGAEPEA) show a composition bias toward acidic residues. Residues 101–111 (PPQSQPQLQSH) are compositionally biased toward low complexity. Residues 115-124 (HPPPPRPLVP) show a composition bias toward pro residues. Polar residues predominate over residues 128 to 145 (TQDLISTVSSQLDETSSE). Low complexity predominate over residues 172–189 (DSGLADLLDVSVDSGSSA). Positions 210 to 212 (NPF) match the NPF 5 motif. 2 disordered regions span residues 225-452 (VPLP…SPPT) and 474-507 (EEMD…NFAP). The segment covering 233 to 272 (KQPPRPPPPRPAPPRPAPPGQAAPQRPPPPLAAVNPPPAA) has biased composition (pro residues). Over residues 325–345 (DLDETIGEGEPPEQEEPDTEQ) the composition is skewed to acidic residues. The span at 384-401 (QVNNMAAPSGTASTQRAT) shows a compositional bias: polar residues. The span at 417 to 429 (DDEDEPEAMQEPE) shows a compositional bias: acidic residues. Positions 493–495 (NPF) match the NPF 6 motif. A phosphoserine mark is found at Ser623 and Ser626. Residues 643–709 (SGVAPQLAPP…QDTPQTPLYD (67 aa)) are disordered. The NPF 7 signature appears at 673 to 675 (NPF). One can recognise an SHD domain in the interval 728-902 (GWEMQLRQPN…KIPALRERAL (175 aa)). An interaction with Syt region spans residues 847–1108 (KEFGSDLKKL…KGIERILGAV (262 aa)). The 314-residue stretch at 906 to 1219 (MEEVQVTAVD…ARHEYKVGIE (314 aa)) folds into the MHD domain. A disordered region spans residues 1226–1262 (TNAYLAATRPIREEPPTTATKPTASPVAPSDSDTDSN). The span at 1241-1254 (PTTATKPTASPVAP) shows a compositional bias: low complexity.

Belongs to the Stoned B family. As to quaternary structure, interacts with the second C2 domain of Syt.

It localises to the cytoplasm. The protein localises to the synapse. In terms of biological role, adapter protein involved in endocytic recycling of synaptic vesicles membranes. May act by mediating the retrieval of synaptotagmin protein Syt from the plasma membrane, thereby facilitating the internalization of multiple synaptic vesicles from the plasma membrane. This chain is Protein stoned-B (stnB), found in Drosophila melanogaster (Fruit fly).